Consider the following 144-residue polypeptide: Large ribosomal subunit protein uL15 (144 aa).

The segment at Met1–Gln54 is disordered. Gly residues-rich tracts occupy residues Arg21–Ala31 and Ser42–Gly52.

This sequence belongs to the universal ribosomal protein uL15 family. Part of the 50S ribosomal subunit.

Its function is as follows. Binds to the 23S rRNA. The chain is Large ribosomal subunit protein uL15 from Shewanella baltica (strain OS223).